The sequence spans 736 residues: Gephyrin (736 aa).

Residues 14–153 (QIRVGVLTVS…LPGSKKGSQE (140 aa)) form an MPT Mo-transferase region. Disordered regions lie at residues 181 to 232 (DELE…DSSS) and 260 to 290 (TASLSTTPSESPRAQATSRLSTASCPTPKVQ). Over residues 187-199 (PSPPPPLSPPPTT) the composition is skewed to pro residues. Polar residues predominate over residues 261-290 (ASLSTTPSESPRAQATSRLSTASCPTPKVQ). Positions 294–736 (SSKENILRAS…VVDVMVIGRL (443 aa)) are MPT adenylyltransferase.

This sequence in the N-terminal section; belongs to the MoaB/Mog family. In the C-terminal section; belongs to the MoeA family. In terms of assembly, homotrimer, homodimer and homooligomer. Interacts with glycine receptors. It depends on Mg(2+) as a cofactor.

It is found in the postsynaptic cell membrane. Its subcellular location is the cell membrane. The protein resides in the cytoplasm. It localises to the cytosol. The protein localises to the cytoskeleton. It is found in the cell projection. Its subcellular location is the dendrite. The protein resides in the postsynaptic density. It carries out the reaction molybdopterin + ATP + H(+) = adenylyl-molybdopterin + diphosphate. The enzyme catalyses adenylyl-molybdopterin + molybdate = Mo-molybdopterin + AMP + H(+). Its pathway is cofactor biosynthesis; molybdopterin biosynthesis. Microtubule-associated protein involved in membrane protein-cytoskeleton interactions. It is thought to anchor the inhibitory glycine receptor (GLYR) to subsynaptic microtubules. Acts as a major instructive molecule at inhibitory synapses, where it also clusters GABA type A receptors. Functionally, also has a catalytic activity and catalyzes two steps in the biosynthesis of the molybdenum cofactor. In the first step, molybdopterin is adenylated. Subsequently, molybdate is inserted into adenylated molybdopterin and AMP is released. This chain is Gephyrin (GPHN), found in Gallus gallus (Chicken).